The sequence spans 302 residues: Olfactory receptor 51H1 (302 aa).

Topologically, residues 1–27 (MTNLNASQANHRNFILTGIPGTPDKNP) are extracellular. An N-linked (GlcNAc...) asparagine glycan is attached at Asn5. The chain crosses the membrane as a helical span at residues 28-48 (WLAFPLGFLYTLTLLGNGTIL). The Cytoplasmic portion of the chain corresponds to 49–56 (AVIKVEPS). The chain crosses the membrane as a helical span at residues 57 to 77 (LHEPTYYFLSILALTDVSLSM). Topologically, residues 78 to 101 (STLPSMLSIYWFNAPQIVFDACIM) are extracellular. An intrachain disulfide couples Cys99 to Cys191. Residues 102–122 (QMFFIHVFGIVESGVLVSMAF) traverse the membrane as a helical segment. Residues 123 to 141 (DRFVAIRNPLHYVSILTHD) are Cytoplasmic-facing. The chain crosses the membrane as a helical span at residues 142–162 (VIRKTGIAVLTRAVCVVFPVP). Over 163–198 (FLIKCLPFCHSNVLSHSYCLHQNMMRLACASTRINS) the chain is Extracellular. Residues 199 to 219 (LYGLIVVIFTLGLDVLLTLLS) traverse the membrane as a helical segment. Residues 220–239 (YVLTLKTVLGIVSRGERLKT) are Cytoplasmic-facing. A helical transmembrane segment spans residues 240–260 (LSTCLSHMSTVLLFYVPFMGA). At 261-276 (ASMIHRFWEHLSPVVH) the chain is on the extracellular side. Residues 277–297 (MVMADIYLLLPPVLNPIVYSV) traverse the membrane as a helical segment. Over 298 to 302 (KTKQI) the chain is Cytoplasmic.

It belongs to the G-protein coupled receptor 1 family.

It localises to the cell membrane. Functionally, odorant receptor. This is Olfactory receptor 51H1 (OR51H1) from Homo sapiens (Human).